We begin with the raw amino-acid sequence, 156 residues long: MNLNATLIGQLIAFALFVWFCMKFVWPPIINAIETRQSQIANALASAEAAKKEQADTKNLVEQELSAAKVQAQEILDAANKRRNEVLDEVKAEAEELKAKIIAQGYAEVEAERKRVQEELRLKVASLAVAGAEKIVGRSIDEAANNDIIDKLVAEL.

Residues 11-31 (LIAFALFVWFCMKFVWPPIIN) traverse the membrane as a helical segment.

It belongs to the ATPase B chain family. F-type ATPases have 2 components, F(1) - the catalytic core - and F(0) - the membrane proton channel. F(1) has five subunits: alpha(3), beta(3), gamma(1), delta(1), epsilon(1). F(0) has three main subunits: a(1), b(2) and c(10-14). The alpha and beta chains form an alternating ring which encloses part of the gamma chain. F(1) is attached to F(0) by a central stalk formed by the gamma and epsilon chains, while a peripheral stalk is formed by the delta and b chains.

It localises to the cell inner membrane. Functionally, f(1)F(0) ATP synthase produces ATP from ADP in the presence of a proton or sodium gradient. F-type ATPases consist of two structural domains, F(1) containing the extramembraneous catalytic core and F(0) containing the membrane proton channel, linked together by a central stalk and a peripheral stalk. During catalysis, ATP synthesis in the catalytic domain of F(1) is coupled via a rotary mechanism of the central stalk subunits to proton translocation. Component of the F(0) channel, it forms part of the peripheral stalk, linking F(1) to F(0). In Haemophilus influenzae (strain PittGG), this protein is ATP synthase subunit b.